We begin with the raw amino-acid sequence, 231 residues long: LexA repressor (231 aa).

Residues 26–46 constitute a DNA-binding region (H-T-H motif); sequence FDEMKLALDLRSKSGIHRLIT. Positions 79 to 98 are disordered; sequence VGFQPRVIDGDRPDRPRPAN. Positions 86–95 are enriched in basic and acidic residues; that stretch reads IDGDRPDRPR. Catalysis depends on for autocatalytic cleavage activity residues serine 152 and lysine 190.

The protein belongs to the peptidase S24 family. Homodimer.

The enzyme catalyses Hydrolysis of Ala-|-Gly bond in repressor LexA.. Represses a number of genes involved in the response to DNA damage (SOS response), including recA and lexA. In the presence of single-stranded DNA, RecA interacts with LexA causing an autocatalytic cleavage which disrupts the DNA-binding part of LexA, leading to derepression of the SOS regulon and eventually DNA repair. The chain is LexA repressor from Ruegeria pomeroyi (strain ATCC 700808 / DSM 15171 / DSS-3) (Silicibacter pomeroyi).